The chain runs to 106 residues: Nucleoid-associated protein bll8115 (106 aa).

It belongs to the YbaB/EbfC family. Homodimer.

The protein localises to the cytoplasm. It is found in the nucleoid. Its function is as follows. Binds to DNA and alters its conformation. May be involved in regulation of gene expression, nucleoid organization and DNA protection. In Bradyrhizobium diazoefficiens (strain JCM 10833 / BCRC 13528 / IAM 13628 / NBRC 14792 / USDA 110), this protein is Nucleoid-associated protein bll8115.